The following is a 665-amino-acid chain: Protein-arginine deiminase type-2 (665 aa).

Aspartate 123, aspartate 125, aspartate 127, valine 129, glutamate 131, asparagine 154, aspartate 156, glutamate 158, aspartate 166, aspartate 169, lysine 171, aspartate 177, aspartate 180, glutamate 354, aspartate 389, phenylalanine 408, leucine 411, and glutamate 412 together coordinate Ca(2+). Catalysis depends on cysteine 647, which acts as the Nucleophile.

This sequence belongs to the protein arginine deiminase family. As to quaternary structure, homodimer. The cofactor is Ca(2+). In terms of tissue distribution, detected in keratinocytes in epidermis (at protein level).

The protein localises to the cytoplasm. The catalysed reaction is L-arginyl-[protein] + H2O = L-citrullyl-[protein] + NH4(+). Catalyzes the deimination of arginine residues of proteins. This is Protein-arginine deiminase type-2 (PADI2) from Homo sapiens (Human).